Here is a 37-residue protein sequence, read N- to C-terminus: MPNWLKKQMQKAFLEKDNYQIKLLNQCWYFYRKKHCS.

As to quaternary structure, can form a complex with SpoIVA and ClpX.

It is found in the forespore. Functionally, ensures proper spore envelope assembly. Represses premature cortex assembly until coat assembly successfully initiates. Also participates in a quality-control pathway that selectively removes defective sporulating cells through regulated cell death. Acts as an adaptator that delivers SpoIVA to the ClpXP proteolytic machinery for degradation, specifically in cells that improperly assemble the spore envelope. This Bacillus subtilis (strain 168) protein is Cortex morphogenetic protein A.